The chain runs to 146 residues: Large ribosomal subunit protein bL21 (146 aa).

The tract at residues 117–146 is disordered; the sequence is ITIGKSAPKSSSKKETVKKETKPKSEKSTN. A compositionally biased stretch (basic and acidic residues) spans 128 to 146; the sequence is SKKETVKKETKPKSEKSTN.

The protein belongs to the bacterial ribosomal protein bL21 family. As to quaternary structure, part of the 50S ribosomal subunit. Contacts protein L20.

Its function is as follows. This protein binds to 23S rRNA in the presence of protein L20. The protein is Large ribosomal subunit protein bL21 of Prochlorococcus marinus (strain MIT 9301).